The following is a 101-amino-acid chain: Urease subunit beta (101 aa).

Belongs to the urease beta subunit family. In terms of assembly, heterotrimer of UreA (gamma), UreB (beta) and UreC (alpha) subunits. Three heterotrimers associate to form the active enzyme.

It is found in the cytoplasm. It carries out the reaction urea + 2 H2O + H(+) = hydrogencarbonate + 2 NH4(+). The protein operates within nitrogen metabolism; urea degradation; CO(2) and NH(3) from urea (urease route): step 1/1. This is Urease subunit beta from Cupriavidus pinatubonensis (strain JMP 134 / LMG 1197) (Cupriavidus necator (strain JMP 134)).